The sequence spans 486 residues: FAD-dependent oxidoreductase domain-containing protein 1 (486 aa).

Residues 62–82 form a helical membrane-spanning segment; the sequence is EHSDVVIVGGGVLGLSVAYWL.

As to quaternary structure, associates with components of the mitochondrial respiratory chain complex I. The cofactor is FAD.

The protein localises to the mitochondrion inner membrane. Its function is as follows. Required for the assembly of the mitochondrial membrane respiratory chain NADH dehydrogenase (Complex I). Involved in mid-late stages of complex I assembly. The sequence is that of FAD-dependent oxidoreductase domain-containing protein 1 from Homo sapiens (Human).